The chain runs to 179 residues: Ubiquitin-conjugating enzyme E2 C (179 aa).

The disordered stretch occupies residues 1 to 31; it reads MASQNRDPVAASVAAARKGAEPSGGAARGPV. Ala-2 bears the N-acetylalanine mark. A Phosphoserine modification is found at Ser-3. Residues 30 to 175 form the UBC core domain; it reads PVGKRLQQEL…LQETYSKQVS (146 aa). The active-site Glycyl thioester intermediate is the Cys-114.

This sequence belongs to the ubiquitin-conjugating enzyme family. Component of the APC/C complex, composed of at least 14 distinct subunits that assemble into a complex of at least 19 chains with a combined molecular mass of around 1.2 MDa. Within this complex, directly interacts with ANAPC2. Post-translationally, autoubiquitinated by the APC/C complex, leading to its degradation by the proteasome. Its degradation plays a central role in APC/C regulation, allowing cyclin-A accumulation before S phase entry. APC/C substrates inhibit the autoubiquitination of UBE2C/UBCH10 but not its E2 function, hence APC/C remaining active until its substrates have been destroyed.

It carries out the reaction S-ubiquitinyl-[E1 ubiquitin-activating enzyme]-L-cysteine + [E2 ubiquitin-conjugating enzyme]-L-cysteine = [E1 ubiquitin-activating enzyme]-L-cysteine + S-ubiquitinyl-[E2 ubiquitin-conjugating enzyme]-L-cysteine.. It catalyses the reaction S-ubiquitinyl-[E1 ubiquitin-activating enzyme]-L-cysteine + [acceptor protein]-L-lysine = [E1 ubiquitin-activating enzyme]-L-cysteine + N(6)-monoubiquitinyl-[acceptor protein]-L-lysine.. It participates in protein modification; protein ubiquitination. Its function is as follows. Accepts ubiquitin from the E1 complex and catalyzes its covalent attachment to other proteins. In vitro catalyzes 'Lys-11'- and 'Lys-48'-linked polyubiquitination. Acts as an essential factor of the anaphase promoting complex/cyclosome (APC/C), a cell cycle-regulated ubiquitin ligase that controls progression through mitosis. Acts by initiating 'Lys-11'-linked polyubiquitin chains on APC/C substrates, leading to the degradation of APC/C substrates by the proteasome and promoting mitotic exit. The polypeptide is Ubiquitin-conjugating enzyme E2 C (UBE2C) (Bos taurus (Bovine)).